Consider the following 145-residue polypeptide: 3-hydroxyacyl-[acyl-carrier-protein] dehydratase FabZ (145 aa).

His52 is an active-site residue.

The protein belongs to the thioester dehydratase family. FabZ subfamily.

The protein resides in the cytoplasm. It carries out the reaction a (3R)-hydroxyacyl-[ACP] = a (2E)-enoyl-[ACP] + H2O. Functionally, involved in unsaturated fatty acids biosynthesis. Catalyzes the dehydration of short chain beta-hydroxyacyl-ACPs and long chain saturated and unsaturated beta-hydroxyacyl-ACPs. In Deinococcus radiodurans (strain ATCC 13939 / DSM 20539 / JCM 16871 / CCUG 27074 / LMG 4051 / NBRC 15346 / NCIMB 9279 / VKM B-1422 / R1), this protein is 3-hydroxyacyl-[acyl-carrier-protein] dehydratase FabZ.